A 119-amino-acid polypeptide reads, in one-letter code: Odin profilin (119 aa).

It belongs to the Asgard profilin family.

The protein localises to the cytoplasm. Its subcellular location is the cytoskeleton. Inhibition of rabbit actin polymerization is reduced by phosphatidylinositol-(4,5)-P2(1,2-dipalmitoyl), a soluble form of the phospholipid phosphatidylinositol, suggesting an unknown lipid might regulate actin-profilin interaction in vivo. Its function is as follows. Binds to actin and affects the structure of the cytoskeleton. At high concentrations inhibits spontaneous rabbit actin nucleation. This strongly suggests this archaea has a profilin-regulated actin system, and actin-type genes can be identified in this organism. This is Odin profilin from Odinarchaeota yellowstonii (strain LCB_4).